Consider the following 480-residue polypeptide: Ammonium transporter 3 member 3 (480 aa).

Transmembrane regions (helical) follow at residues 31–51 (SATLVGLQSMPGLVILYGSIV), 59–79 (SAFMALYAFAAVWICWVVWAY), 135–155 (MVYFQCMFASITIIILAGSLL), 169–189 (LWITFSYTVCAFSLWGGGFLF), 198–218 (GGYVIHLSSGIAGLTAAYWVG), 233–253 (ILLVLAGAGLLWLGWTGFNGG), 265–287 (AVLNTHICASTSLLVWTILDVFF), 292–314 (SVIGAVQGMITGLVCITPGAGLV), 318–337 (AAIVMGILSGSIPWYTMMVL), 361–381 (GFLGGATTGLFAEPILCSLFL), and 407–427 (LFVTAWNIVITSIICVIISLI).

Belongs to the ammonia transporter channel (TC 1.A.11.2) family.

It localises to the membrane. Its function is as follows. Involved in ammonium transport. The polypeptide is Ammonium transporter 3 member 3 (AMT3-3) (Oryza sativa subsp. japonica (Rice)).